A 267-amino-acid chain; its full sequence is Exosome complex component Rrp42 (267 aa).

It belongs to the RNase PH family. Rrp42 subfamily. In terms of assembly, component of the archaeal exosome complex. Forms a hexameric ring-like arrangement composed of 3 Rrp41-Rrp42 heterodimers. The hexameric ring associates with a trimer of Rrp4 and/or Csl4 subunits.

Its subcellular location is the cytoplasm. In terms of biological role, non-catalytic component of the exosome, which is a complex involved in RNA degradation. Contributes to the structuring of the Rrp41 active site. This Methanopyrus kandleri (strain AV19 / DSM 6324 / JCM 9639 / NBRC 100938) protein is Exosome complex component Rrp42.